We begin with the raw amino-acid sequence, 145 residues long: MDVLVINGPNLNLLGKRQPHIYGNKTIEDINNELHKIAHNNNVTIDFFQSNHEGEIVDKIQQSAAKIIIINPAAYTHTSIAIRDAFLAINKPFIEIHLSNIYNREEFRTKSLLSDIAYGCIFGFGPNGYTLALIEAINYINMKGE.

Tyr-22 functions as the Proton acceptor in the catalytic mechanism. Substrate contacts are provided by Asn-71, His-77, and Asp-84. Residue His-97 is the Proton donor of the active site. Substrate-binding positions include 98–99 (LS) and Arg-108.

It belongs to the type-II 3-dehydroquinase family. In terms of assembly, homododecamer.

The catalysed reaction is 3-dehydroquinate = 3-dehydroshikimate + H2O. Its pathway is metabolic intermediate biosynthesis; chorismate biosynthesis; chorismate from D-erythrose 4-phosphate and phosphoenolpyruvate: step 3/7. In terms of biological role, catalyzes a trans-dehydration via an enolate intermediate. This is 3-dehydroquinate dehydratase from Francisella philomiragia subsp. philomiragia (strain ATCC 25017 / CCUG 19701 / FSC 153 / O#319-036).